We begin with the raw amino-acid sequence, 517 residues long: Crotonobetaine/carnitine--CoA ligase (517 aa).

It belongs to the ATP-dependent AMP-binding enzyme family.

The catalysed reaction is 4-(trimethylamino)butanoate + ATP + CoA = 4-(trimethylamino)butanoyl-CoA + AMP + diphosphate. The enzyme catalyses crotonobetaine + ATP + CoA = crotonobetainyl-CoA + AMP + diphosphate. It carries out the reaction (R)-carnitine + ATP + CoA = (R)-carnitinyl-CoA + AMP + diphosphate. Its pathway is amine and polyamine metabolism; carnitine metabolism. Functionally, catalyzes the transfer of CoA to carnitine, generating the initial carnitinyl-CoA needed for the CaiB reaction cycle. Also has activity toward crotonobetaine and gamma-butyrobetaine. The polypeptide is Crotonobetaine/carnitine--CoA ligase (Shigella flexneri).